A 311-amino-acid polypeptide reads, in one-letter code: Ribosomal protein L11 methyltransferase (311 aa).

4 residues coordinate S-adenosyl-L-methionine: T162, G183, D205, and N248.

This sequence belongs to the methyltransferase superfamily. PrmA family.

The protein localises to the cytoplasm. The enzyme catalyses L-lysyl-[protein] + 3 S-adenosyl-L-methionine = N(6),N(6),N(6)-trimethyl-L-lysyl-[protein] + 3 S-adenosyl-L-homocysteine + 3 H(+). In terms of biological role, methylates ribosomal protein L11. In Bacillus licheniformis (strain ATCC 14580 / DSM 13 / JCM 2505 / CCUG 7422 / NBRC 12200 / NCIMB 9375 / NCTC 10341 / NRRL NRS-1264 / Gibson 46), this protein is Ribosomal protein L11 methyltransferase.